Here is a 55-residue protein sequence, read N- to C-terminus: Large ribosomal subunit protein bL33 (55 aa).

This sequence belongs to the bacterial ribosomal protein bL33 family.

The polypeptide is Large ribosomal subunit protein bL33 (Rhodospirillum centenum (strain ATCC 51521 / SW)).